Consider the following 417-residue polypeptide: UDP-N-acetylglucosamine 1-carboxyvinyltransferase (417 aa).

22 to 23 contacts phosphoenolpyruvate; sequence KN. Arginine 94 provides a ligand contact to UDP-N-acetyl-alpha-D-glucosamine. Catalysis depends on cysteine 118, which acts as the Proton donor. Position 118 is a 2-(S-cysteinyl)pyruvic acid O-phosphothioketal (cysteine 118). UDP-N-acetyl-alpha-D-glucosamine-binding positions include 123-127, aspartate 306, and isoleucine 328; that span reads RPIDQ.

This sequence belongs to the EPSP synthase family. MurA subfamily.

It localises to the cytoplasm. The catalysed reaction is phosphoenolpyruvate + UDP-N-acetyl-alpha-D-glucosamine = UDP-N-acetyl-3-O-(1-carboxyvinyl)-alpha-D-glucosamine + phosphate. It participates in cell wall biogenesis; peptidoglycan biosynthesis. In terms of biological role, cell wall formation. Adds enolpyruvyl to UDP-N-acetylglucosamine. This chain is UDP-N-acetylglucosamine 1-carboxyvinyltransferase, found in Clostridium botulinum (strain ATCC 19397 / Type A).